The following is a 127-amino-acid chain: Holo-[acyl-carrier-protein] synthase (127 aa).

Residues D9 and E58 each contribute to the Mg(2+) site.

The protein belongs to the P-Pant transferase superfamily. AcpS family. Mg(2+) serves as cofactor.

The protein resides in the cytoplasm. The catalysed reaction is apo-[ACP] + CoA = holo-[ACP] + adenosine 3',5'-bisphosphate + H(+). Functionally, transfers the 4'-phosphopantetheine moiety from coenzyme A to a Ser of acyl-carrier-protein. In Shewanella putrefaciens (strain CN-32 / ATCC BAA-453), this protein is Holo-[acyl-carrier-protein] synthase.